The following is a 298-amino-acid chain: MEDRYGREIRSFRLSITPKCNLKCFYCHKEGRNEEHGKLMSADEIGKIVKSSLEFGVRKIKISGGEPLLRTDLPEIIENIKDEQIKDISLTTNGILLEKYAQKLKDAGLDRVNVSLDTLNPEQYKKITVGGNIESVKKGIEKAIEVGLTPLKVNFLAMDCTVNQLPAIMDYCRKIGAILQIIEFIPMEPELKHHHIDVVPIEEEIAKSADQVFTRKFMQNRKKYLIDGLEVEFVRPMDNTEFCEHCTRIRLTYDGYLKPCLLRDDNLVDVVNPVRNGEDTRKYFIKCIEEREPFCKAQ.

In terms of domain architecture, Radical SAM core spans 4–227 (RYGREIRSFR…MQNRKKYLID (224 aa)). Residue arginine 13 participates in GTP binding. Positions 20 and 24 each coordinate [4Fe-4S] cluster. Residue tyrosine 26 participates in S-adenosyl-L-methionine binding. Residue cysteine 27 participates in [4Fe-4S] cluster binding. Lysine 61 contacts GTP. S-adenosyl-L-methionine is bound at residue glycine 65. Residue threonine 91 participates in GTP binding. Serine 115 contributes to the S-adenosyl-L-methionine binding site. Lysine 152 lines the GTP pocket. The [4Fe-4S] cluster site is built by cysteine 243 and cysteine 246. A GTP-binding site is contributed by 248 to 250 (RIR). Cysteine 260 provides a ligand contact to [4Fe-4S] cluster.

This sequence belongs to the radical SAM superfamily. MoaA family. The cofactor is [4Fe-4S] cluster.

The catalysed reaction is GTP + AH2 + S-adenosyl-L-methionine = (8S)-3',8-cyclo-7,8-dihydroguanosine 5'-triphosphate + 5'-deoxyadenosine + L-methionine + A + H(+). It functions in the pathway cofactor biosynthesis; molybdopterin biosynthesis. Its function is as follows. Catalyzes the cyclization of GTP to (8S)-3',8-cyclo-7,8-dihydroguanosine 5'-triphosphate. In Methanococcus maripaludis (strain C5 / ATCC BAA-1333), this protein is Probable GTP 3',8-cyclase.